A 672-amino-acid polypeptide reads, in one-letter code: Glycine--tRNA ligase beta subunit (672 aa).

Belongs to the class-II aminoacyl-tRNA synthetase family. In terms of assembly, tetramer of two alpha and two beta subunits.

It is found in the cytoplasm. It catalyses the reaction tRNA(Gly) + glycine + ATP = glycyl-tRNA(Gly) + AMP + diphosphate. The chain is Glycine--tRNA ligase beta subunit from Thermotoga sp. (strain RQ2).